We begin with the raw amino-acid sequence, 246 residues long: Carboxylesterase (246 aa).

Ser93 acts as the Nucleophile in catalysis. Catalysis depends on charge relay system residues Asp192 and His222.

This sequence belongs to the lipase/esterase LIP3/BchO family. Homodimer.

The catalysed reaction is a carboxylic ester + H2O = an alcohol + a carboxylate + H(+). Involved in the detoxification of xenobiotics. Shows maximal activity with C6 substrates, with gradually decreasing activity from C8 to C12 substrates. No activity for higher chain length substrates acids rather than long-chain ones. This Bacillus subtilis (strain 168) protein is Carboxylesterase (est).